The chain runs to 118 residues: Acetylcholine receptor subunit beta (118 aa).

The signal sequence occupies residues Ala-1–Ala-15.

It belongs to the ligand-gated ion channel (TC 1.A.9) family. Acetylcholine receptor (TC 1.A.9.1) subfamily. Beta-1/CHRNB1 sub-subfamily. Pentamer of two alpha chains, and one each of the beta, delta, and gamma chains.

The protein resides in the postsynaptic cell membrane. The protein localises to the cell membrane. It carries out the reaction K(+)(in) = K(+)(out). The catalysed reaction is Na(+)(in) = Na(+)(out). Functionally, after binding acetylcholine, the AChR responds by an extensive change in conformation that affects all subunits and leads to opening of an ion-conducting channel across the plasma membrane. In Gallus gallus (Chicken), this protein is Acetylcholine receptor subunit beta (CHRNB1).